The following is a 343-amino-acid chain: MDLIYIPEDLSSCPKFGNKSCPPTNRSFRVRMIMYLFMTGAMVITIFGNLVIIISISHFKQLHSPTNFLILSMATTDFLLGFVIMPYSMVRSVESCWYFGDSFCKFHASFDMMLSLTSIFHLCSIAIDRFYAVCDPLHYTTTMTVSMIKRLLAFCWAAPALFSFGLVLSEANVSGMQSYEILVACFNFCALTFNKFWGTILFTTCFFTPGSIMVGIYGKIFIVSRRHARALSDMPANTKGAVGKNLSKKKDRKAAKTLGIVMGVFLACWLPCFLAVLIDPYLDYSTPIIVLDLLVWLGYFNSTCNPLIHGFFYPWFRKALQFIVSGKIFRSNSDTANLFPEAH.

Topologically, residues 1–35 (MDLIYIPEDLSSCPKFGNKSCPPTNRSFRVRMIMY) are extracellular. N-linked (GlcNAc...) asparagine glycans are attached at residues N18 and N25. 2 cysteine pairs are disulfide-bonded: C21–C185 and C104–C189. A helical transmembrane segment spans residues 36-56 (LFMTGAMVITIFGNLVIIISI). Residues 57 to 68 (SHFKQLHSPTNF) are Cytoplasmic-facing. The chain crosses the membrane as a helical span at residues 69–89 (LILSMATTDFLLGFVIMPYSM). At 90-150 (VRSVESCWYF…TTMTVSMIKR (61 aa)) the chain is on the extracellular side. Residues 151-168 (LLAFCWAAPALFSFGLVL) form a helical membrane-spanning segment. Residues 169-172 (SEAN) are Cytoplasmic-facing. The tract at residues 173-186 (VSGMQSYEILVACF) is extracellular Loop 2 (ECL2). A helical membrane pass occupies residues 173-193 (VSGMQSYEILVACFNFCALTF). Over 194–198 (NKFWG) the chain is Extracellular. The chain crosses the membrane as a helical span at residues 199–223 (TILFTTCFFTPGSIMVGIYGKIFIV). Topologically, residues 224-257 (SRRHARALSDMPANTKGAVGKNLSKKKDRKAAKT) are cytoplasmic. Residues 258-278 (LGIVMGVFLACWLPCFLAVLI) traverse the membrane as a helical segment. Topologically, residues 279–287 (DPYLDYSTP) are extracellular. The chain crosses the membrane as a helical span at residues 288–308 (IIVLDLLVWLGYFNSTCNPLI). The Cytoplasmic segment spans residues 309–343 (HGFFYPWFRKALQFIVSGKIFRSNSDTANLFPEAH).

This sequence belongs to the G-protein coupled receptor 1 family. Specifically expressed in neurons of the olfactory epithelium.

The protein resides in the cell membrane. Its function is as follows. Olfactory receptor activated by several primary trace amines, including isoamylamine. Activated by isoamylamine and cyclohexylamine, but not to the corresponding alcohols, isoamylalcohol and cyclohexanol. This receptor is probably mediated by the G(s)-class of G-proteins which activate adenylate cyclase. The sequence is that of Trace amine-associated receptor 3 from Mus musculus (Mouse).